The chain runs to 206 residues: Glutathione S-transferase 1 (206 aa).

Residues 2–79 (PQYKLTYFDI…YLGRQFGLAG (78 aa)) form the GST N-terminal domain. Glutathione-binding positions include Tyr8, Trp39, Lys43, 49 to 51 (GQL), and 63 to 64 (QS). Residues 81 to 206 (TPMEEAQVDS…WIAERPKTPY (126 aa)) form the GST C-terminal domain.

The protein belongs to the GST superfamily. Sigma family.

The enzyme catalyses RX + glutathione = an S-substituted glutathione + a halide anion + H(+). Its function is as follows. Conjugation of reduced glutathione to a wide number of exogenous and endogenous hydrophobic electrophiles. Can also function as a GSH peroxidase. The protein is Glutathione S-transferase 1 (GST1) of Ascaris suum (Pig roundworm).